Consider the following 265-residue polypeptide: Proteasome subunit alpha (265 aa).

The disordered stretch occupies residues 236-265; sequence EKDSKGSKGAQNPKGARDSKNSKSYGESTD.

The protein belongs to the peptidase T1A family. As to quaternary structure, the 20S proteasome core is composed of 14 alpha and 14 beta subunits that assemble into four stacked heptameric rings, resulting in a barrel-shaped structure. The two inner rings, each composed of seven catalytic beta subunits, are sandwiched by two outer rings, each composed of seven alpha subunits. The catalytic chamber with the active sites is on the inside of the barrel. Has a gated structure, the ends of the cylinder being occluded by the N-termini of the alpha-subunits. Is capped by the proteasome-associated ATPase, ARC.

It is found in the cytoplasm. It functions in the pathway protein degradation; proteasomal Pup-dependent pathway. Its activity is regulated as follows. The formation of the proteasomal ATPase ARC-20S proteasome complex, likely via the docking of the C-termini of ARC into the intersubunit pockets in the alpha-rings, may trigger opening of the gate for substrate entry. Interconversion between the open-gate and close-gate conformations leads to a dynamic regulation of the 20S proteasome proteolysis activity. Its function is as follows. Component of the proteasome core, a large protease complex with broad specificity involved in protein degradation. The protein is Proteasome subunit alpha of Mycobacterium leprae (strain Br4923).